Here is a 360-residue protein sequence, read N- to C-terminus: MSNLENLQTQILADIAASSDEAALEAVRVGALGKKGSISALLATLGKMDPEQRKTEGAAINLAKEAVTQALTARRDLLKAAALDAKLAAETIDVTLPLREPLAEQGRIHPLSQVWDELTAIFADMGFAIAEGPDIETDDNNFTRLNFPEGHPAREMHDTFYFNPKEDGSRLLLRTHTSPVQVRTMLSQRPPIRVICPGRTYRSDSDQTHTPMFHQVEGLVIDKGSHLGHLKWILAEFCKAFFEVDNVNMRFRPSFFPFTEPSLEVDIQCRRGNGEIRFGEGEDWLEILGCGMVHPNVLTACGIDPEVYQGFAWGMGIDRIAMLKYGMADLRQLFEADSRWLNHYGFKPLDIPSLAGGLSS.

E260 contacts Mg(2+).

Belongs to the class-II aminoacyl-tRNA synthetase family. Phe-tRNA synthetase alpha subunit type 1 subfamily. As to quaternary structure, tetramer of two alpha and two beta subunits. It depends on Mg(2+) as a cofactor.

The protein resides in the cytoplasm. The enzyme catalyses tRNA(Phe) + L-phenylalanine + ATP = L-phenylalanyl-tRNA(Phe) + AMP + diphosphate + H(+). This is Phenylalanine--tRNA ligase alpha subunit from Rhodopseudomonas palustris (strain BisB5).